The chain runs to 117 residues: Protein YchN (117 aa).

This sequence to M.jannaschii MJ0989. As to quaternary structure, homohexamer. The hexamer is formed by a dimer of trimers.

This is Protein YchN (ychN) from Escherichia coli O157:H7.